The primary structure comprises 972 residues: Leucine--tRNA ligase (972 aa).

A 'HIGH' region motif is present at residues 78–89; the sequence is PYPSGDGLHVGH. Residues 741 to 745 carry the 'KMSKS' region motif; it reads KIGKS. Residue Lys744 coordinates ATP.

The protein belongs to the class-I aminoacyl-tRNA synthetase family.

It localises to the cytoplasm. It catalyses the reaction tRNA(Leu) + L-leucine + ATP = L-leucyl-tRNA(Leu) + AMP + diphosphate. The chain is Leucine--tRNA ligase from Mycobacterium leprae (strain Br4923).